We begin with the raw amino-acid sequence, 403 residues long: FAD-dependent monooxygenase tazP (403 aa).

Positions 75, 144, 354, and 367 each coordinate FAD.

This sequence belongs to the paxM FAD-dependent monooxygenase family. It depends on FAD as a cofactor.

Its pathway is secondary metabolite biosynthesis. Its function is as follows. FAD-dependent monooxygenase; part of the gene cluster that mediates the biosynthesis of azaterrilone A and other azaphilones, a class of fungal metabolites characterized by a highly oxygenated pyrano-quinone bicyclic core and exhibiting a broad range of bioactivities. The first step of the pathway begins with the non-reducing polyketide synthase tazA that assembles one acetyl-CoA starter unit, five malonyl-CoA units, and catalyzes a series of Claisen condensations, methylation, PT-mediated cyclization, and finally releases the first hexaketide precursor through the R-domain. The tazA product then undergoes reduction on its terminal ketone and the following pyran-ring formation by yet undetermined enzyme(s). Dehydration and enoyl reduction, possibly involving the trans-enoyl reductase tazE leads to the next intermediate. TazD is predicted as an acetyltransferase and might catalyze the acetylation steps leading to the synthesis of azaterrilone A. Azaterrilone A is not the final product of the taz pathway and both the highly reducing polyketide synthase tazB and the dual enzyme tazHJ catalyze late steps of the pathway, leading to the production of the 2 final stereoisomers that contain additional polyketide modification whose structures have still to be determined. This is FAD-dependent monooxygenase tazP from Aspergillus terreus (strain NIH 2624 / FGSC A1156).